The primary structure comprises 55 residues: ATP synthase F(0) complex subunit 8 (55 aa).

A helical membrane pass occupies residues 9–29; the sequence is WFAIMVFSWFVFLIFLPPKIM.

Belongs to the ATPase protein 8 family. Component of the ATP synthase complex composed at least of ATP5F1A/subunit alpha, ATP5F1B/subunit beta, ATP5MC1/subunit c (homooctomer), MT-ATP6/subunit a, MT-ATP8/subunit 8, ATP5ME/subunit e, ATP5MF/subunit f, ATP5MG/subunit g, ATP5MK/subunit k, ATP5MJ/subunit j, ATP5F1C/subunit gamma, ATP5F1D/subunit delta, ATP5F1E/subunit epsilon, ATP5PF/subunit F6, ATP5PB/subunit b, ATP5PD/subunit d, ATP5PO/subunit OSCP. ATP synthase complex consists of a soluble F(1) head domain (subunits alpha(3) and beta(3)) - the catalytic core - and a membrane F(0) domain - the membrane proton channel (subunits c, a, 8, e, f, g, k and j). These two domains are linked by a central stalk (subunits gamma, delta, and epsilon) rotating inside the F1 region and a stationary peripheral stalk (subunits F6, b, d, and OSCP).

It is found in the mitochondrion membrane. Subunit 8, of the mitochondrial membrane ATP synthase complex (F(1)F(0) ATP synthase or Complex V) that produces ATP from ADP in the presence of a proton gradient across the membrane which is generated by electron transport complexes of the respiratory chain. ATP synthase complex consist of a soluble F(1) head domain - the catalytic core - and a membrane F(1) domain - the membrane proton channel. These two domains are linked by a central stalk rotating inside the F(1) region and a stationary peripheral stalk. During catalysis, ATP synthesis in the catalytic domain of F(1) is coupled via a rotary mechanism of the central stalk subunits to proton translocation. In vivo, can only synthesize ATP although its ATP hydrolase activity can be activated artificially in vitro. Part of the complex F(0) domain. The protein is ATP synthase F(0) complex subunit 8 of Tetraodon nigroviridis (Spotted green pufferfish).